A 178-amino-acid chain; its full sequence is ATP synthase subunit delta (178 aa).

It belongs to the ATPase delta chain family. F-type ATPases have 2 components, F(1) - the catalytic core - and F(0) - the membrane proton channel. F(1) has five subunits: alpha(3), beta(3), gamma(1), delta(1), epsilon(1). F(0) has three main subunits: a(1), b(2) and c(10-14). The alpha and beta chains form an alternating ring which encloses part of the gamma chain. F(1) is attached to F(0) by a central stalk formed by the gamma and epsilon chains, while a peripheral stalk is formed by the delta and b chains.

It is found in the cell membrane. F(1)F(0) ATP synthase produces ATP from ADP in the presence of a proton or sodium gradient. F-type ATPases consist of two structural domains, F(1) containing the extramembraneous catalytic core and F(0) containing the membrane proton channel, linked together by a central stalk and a peripheral stalk. During catalysis, ATP synthesis in the catalytic domain of F(1) is coupled via a rotary mechanism of the central stalk subunits to proton translocation. Its function is as follows. This protein is part of the stalk that links CF(0) to CF(1). It either transmits conformational changes from CF(0) to CF(1) or is implicated in proton conduction. The polypeptide is ATP synthase subunit delta (Desulfitobacterium hafniense (strain Y51)).